Reading from the N-terminus, the 148-residue chain is Putative nickel-responsive regulator (148 aa).

The Ni(2+) site is built by His-76, His-87, His-89, and Cys-95.

Belongs to the transcriptional regulatory CopG/NikR family. Requires Ni(2+) as cofactor.

Functionally, transcriptional regulator. The sequence is that of Putative nickel-responsive regulator from Rhodopseudomonas palustris (strain ATCC BAA-98 / CGA009).